Reading from the N-terminus, the 165-residue chain is Large ribosomal subunit protein uL15 (165 aa).

The segment at 1–44 (MSLNQLKAPRGANRAKKRVGRGQGSGLGKTAGRGGKGQKARSGN) is disordered. Over residues 21–37 (RGQGSGLGKTAGRGGKG) the composition is skewed to gly residues.

It belongs to the universal ribosomal protein uL15 family. In terms of assembly, part of the 50S ribosomal subunit.

Its function is as follows. Binds to the 23S rRNA. The polypeptide is Large ribosomal subunit protein uL15 (Anaeromyxobacter dehalogenans (strain 2CP-C)).